The chain runs to 702 residues: Cadmium, zinc and cobalt-transporting ATPase (702 aa).

Over 1–86 the chain is Cytoplasmic; sequence MRLVKQEYVL…HIKKSADDGY (86 aa). The region spanning 4-72 is the HMA domain; sequence VKQEYVLDGL…KVKSIDPHVT (69 aa). The Cd(2+) site is built by C15 and C18. Co(2+)-binding residues include C15 and C18. Zn(2+) is bound by residues C15 and C18. The chain crosses the membrane as a helical span at residues 87–107; the sequence is RNRMVNMLIRMAAAVILGAAA. Residues 108–116 are Extracellular-facing; it reads YLVQSGTIE. A helical transmembrane segment spans residues 117–136; it reads FFLFLGAYLIIGGDIIIRAV. Residues 137–143 are Cytoplasmic-facing; that stretch reads KNIIRGQ. The chain crosses the membrane as a helical span at residues 144-163; sequence VFDEHFLMALATIGAFLIQQ. The Extracellular segment spans residues 164 to 166; it reads YPE. Residues 167-186 form a helical membrane-spanning segment; sequence GVAVMLFYQIGELFQGAAVS. Residues 187-320 lie on the Cytoplasmic side of the membrane; the sequence is RSRKSISALM…ITKFAKYYTP (134 aa). Residues 321–339 traverse the membrane as a helical segment; sequence AVVIIAVLLAFVPPLVLSG. The Extracellular segment spans residues 340–345; that stretch reads AALSDW. A helical transmembrane segment spans residues 346–363; sequence VYRALIFLVISCPCALVV. At 364 to 648 the chain is on the cytoplasmic side; the sequence is SIPLGFFGGI…AIRIAKRTRR (285 aa). D401 acts as the 4-aspartylphosphate intermediate in catalysis. Residues D595 and D599 each coordinate Mg(2+). The helical transmembrane segment at 649–670 threads the bilayer; it reads IVWQNIGFALGVKAIFLILGAF. Topologically, residues 671–678 are extracellular; sequence GIATMWEA. Residues 679 to 694 form a helical membrane-spanning segment; that stretch reads VFSDVGVTLLAVANAM. Residues 695 to 702 lie on the Cytoplasmic side of the membrane; it reads RVMRLKNK.

Belongs to the cation transport ATPase (P-type) (TC 3.A.3) family. Type IB subfamily.

It localises to the cell membrane. It carries out the reaction Zn(2+)(in) + ATP + H2O = Zn(2+)(out) + ADP + phosphate + H(+). The enzyme catalyses Cd(2+)(in) + ATP + H2O = Cd(2+)(out) + ADP + phosphate + H(+). In terms of biological role, couples the hydrolysis of ATP with the transport of cadmium, zinc and cobalt out of the cell. Does not seem to transport copper. The sequence is that of Cadmium, zinc and cobalt-transporting ATPase (cadA) from Bacillus subtilis (strain 168).